The chain runs to 752 residues: Lid2 complex component jmj3 (752 aa).

In terms of domain architecture, JmjN spans 34–75; it reads IPVVEPKISEFVDMESFIRRVERLGKKYGAIKVVRPSSVLNP. Residues 162–333 form the JmjC domain; the sequence is YTNRPSIPFY…NYEFSNLRRL (172 aa). Polar residues-rich tracts occupy residues 391 to 402 and 409 to 423; these read SFSQRDFDSPNS and LMSN…HFNS. A disordered region spans residues 391–438; that stretch reads SFSQRDFDSPNSINPPSPLMSNHESASTEHFNSTTTTEKELSSLHVGE. Positions 427-438 are enriched in basic and acidic residues; that stretch reads TEKELSSLHVGE.

In terms of assembly, component of the Lid2 complex composed of ash2, jmj3, lid2, sdc1 and snt2.

Its subcellular location is the nucleus. The chain is Lid2 complex component jmj3 from Schizosaccharomyces pombe (strain 972 / ATCC 24843) (Fission yeast).